The sequence spans 305 residues: 4-diphosphocytidyl-2-C-methyl-D-erythritol kinase (305 aa).

Lys-10 is a catalytic residue. An ATP-binding site is contributed by 95–105; sequence PVTAGLGGGSS. Asp-136 is an active-site residue. The interval 286–305 is disordered; the sequence is PGVTPWRSPRSASSPSTKRS. The span at 290 to 305 shows a compositional bias: low complexity; the sequence is PWRSPRSASSPSTKRS.

It belongs to the GHMP kinase family. IspE subfamily.

The enzyme catalyses 4-CDP-2-C-methyl-D-erythritol + ATP = 4-CDP-2-C-methyl-D-erythritol 2-phosphate + ADP + H(+). It functions in the pathway isoprenoid biosynthesis; isopentenyl diphosphate biosynthesis via DXP pathway; isopentenyl diphosphate from 1-deoxy-D-xylulose 5-phosphate: step 3/6. In terms of biological role, catalyzes the phosphorylation of the position 2 hydroxy group of 4-diphosphocytidyl-2C-methyl-D-erythritol. This Anaeromyxobacter sp. (strain Fw109-5) protein is 4-diphosphocytidyl-2-C-methyl-D-erythritol kinase.